We begin with the raw amino-acid sequence, 117 residues long: Immunoglobulin heavy variable 3-30-3 (117 aa).

The N-terminal stretch at 1–19 (MEFGLSWVFLVALLRGVQC) is a signal peptide. Glutamine 20 is modified (pyrrolidone carboxylic acid). A framework-1 region spans residues 20 to 44 (QVQLVESGGGVVQPGRSLRLSCAAS). An Ig-like domain is found at 20–117 (QVQLVESGGG…EDTAVYYCAR (98 aa)). Cysteine 41 and cysteine 115 are disulfide-bonded. A complementarity-determining-1 region spans residues 45–52 (GFTFSSYA). Positions 53 to 69 (MHWVRQAPGKGLEWVAV) are framework-2. Residues 70-77 (ISYDGSNK) form a complementarity-determining-2 region. A framework-3 region spans residues 78–115 (YYADSVKGRFTISRDNSKNTLYLQMNSLRAEDTAVYYC). The interval 116–117 (AR) is complementarity-determining-3.

Immunoglobulins are composed of two identical heavy chains and two identical light chains; disulfide-linked.

It is found in the secreted. It localises to the cell membrane. In terms of biological role, v region of the variable domain of immunoglobulin heavy chains that participates in the antigen recognition. Immunoglobulins, also known as antibodies, are membrane-bound or secreted glycoproteins produced by B lymphocytes. In the recognition phase of humoral immunity, the membrane-bound immunoglobulins serve as receptors which, upon binding of a specific antigen, trigger the clonal expansion and differentiation of B lymphocytes into immunoglobulins-secreting plasma cells. Secreted immunoglobulins mediate the effector phase of humoral immunity, which results in the elimination of bound antigens. The antigen binding site is formed by the variable domain of one heavy chain, together with that of its associated light chain. Thus, each immunoglobulin has two antigen binding sites with remarkable affinity for a particular antigen. The variable domains are assembled by a process called V-(D)-J rearrangement and can then be subjected to somatic hypermutations which, after exposure to antigen and selection, allow affinity maturation for a particular antigen. This Homo sapiens (Human) protein is Immunoglobulin heavy variable 3-30-3.